The primary structure comprises 129 residues: MAKDYSRTQRIGDQMQRELAVLIQREIKDPRLGLVTITAVDVSRDLSHAKVFITVMGKDDDAEQIKLNLEILGEAAGYLRMLLGKSMKVRTIPQLHFHYDASIRRGAELSALIERAVAEDRKHQDGSEG.

This sequence belongs to the RbfA family. Monomer. Binds 30S ribosomal subunits, but not 50S ribosomal subunits or 70S ribosomes.

The protein localises to the cytoplasm. Its function is as follows. One of several proteins that assist in the late maturation steps of the functional core of the 30S ribosomal subunit. Associates with free 30S ribosomal subunits (but not with 30S subunits that are part of 70S ribosomes or polysomes). Required for efficient processing of 16S rRNA. May interact with the 5'-terminal helix region of 16S rRNA. The polypeptide is Ribosome-binding factor A (Ectopseudomonas mendocina (strain ymp) (Pseudomonas mendocina)).